The chain runs to 266 residues: Phosphate import ATP-binding protein PstB 2 (266 aa).

Positions 13 to 252 constitute an ABC transporter domain; sequence LEAQGVNVYY…GPTEEIFQNP (240 aa). 45–52 contacts ATP; it reads GPSGCGKS.

This sequence belongs to the ABC transporter superfamily. Phosphate importer (TC 3.A.1.7) family. The complex is composed of two ATP-binding proteins (PstB), two transmembrane proteins (PstC and PstA) and a solute-binding protein (PstS).

The protein localises to the cell inner membrane. The catalysed reaction is phosphate(out) + ATP + H2O = ADP + 2 phosphate(in) + H(+). Part of the ABC transporter complex PstSACB involved in phosphate import. Responsible for energy coupling to the transport system. The polypeptide is Phosphate import ATP-binding protein PstB 2 (Synechocystis sp. (strain ATCC 27184 / PCC 6803 / Kazusa)).